The following is a 395-amino-acid chain: MPIRTVMKANEAAAWAAKLAKPKVIAAFPITPSTLVPEKISEFVANGELDAEFIKVESEHSAISALVGASAAGVRTFTATASQGLALMHEVLFIAAGMRLPIVMAIGNRALSAPINIWNDWQDTISQRDTGWIQFYAENNQEALDLILLAYKVAEDERVLLPAMVGFDAFILTHTVEPVEIPDQEVVDEFLGEYEPKHAYLDPKRPITQGTLAFPAHYMEARYLVWEAMENARKVIDEAFAEFEKKFGRKYQKIEEYRTDDAEIIFVTMGSLAGTLKDWVDKKREEGYKVGAAKMTVYRPFPVEEIRELAKKTKVLAFIEKDISMGLYGAVFTDASAALINESEKPLMLDFIAGLGGRDVTFNQLDEALSIAKEALEKGKVEKPIHWIGLRKELL.

In terms of assembly, heterotetramer of one alpha, one beta, one delta and one gamma chain.

It carries out the reaction 2 oxidized [2Fe-2S]-[ferredoxin] + pyruvate + CoA = 2 reduced [2Fe-2S]-[ferredoxin] + acetyl-CoA + CO2 + H(+). The polypeptide is Pyruvate synthase subunit PorA (porA) (Pyrococcus abyssi (strain GE5 / Orsay)).